Consider the following 279-residue polypeptide: Vomeronasal type-1 receptor A8 (279 aa).

At 1–19 (MNKDHTLYCSVYIRNAFFS) the chain is on the extracellular side. Residues 20–40 (EIGIGISANSCLLLFHTFMFI) form a helical membrane-spanning segment. Topologically, residues 41–49 (RGHRPRLTD) are cytoplasmic. The helical transmembrane segment at 50–70 (LPIGFVALIHLVMLLLAAYIT) threads the bilayer. Residues 71–93 (EDFFMSSGGWDDITCKLVIFLHR) are Extracellular-facing. An intrachain disulfide couples Cys-85 to Cys-172. A helical membrane pass occupies residues 94 to 114 (FFRSLSVCATCLLSVFQAIIL). The Cytoplasmic portion of the chain corresponds to 115–134 (CPQSSHLAKLKQNSPHQLSY). A helical transmembrane segment spans residues 135–155 (FFIFLSIFYTSISSQILIAAI). The Extracellular portion of the chain corresponds to 156–159 (PTQN). Asn-159 is a glycosylation site (N-linked (GlcNAc...) asparagine). The helical transmembrane segment at 160–180 (ITFVNLIYITNSCSFLPLSSS) threads the bilayer. Residues 181-187 (MQHTFST) lie on the Cytoplasmic side of the membrane. Residues 188–208 (LLTFRNVFVIGLMGLSTCYMA) form a helical membrane-spanning segment. The Extracellular portion of the chain corresponds to 209–238 (TLLCRHKTRSQRLQNSKLSPKATPEQRALR). The helical transmembrane segment at 239-259 (TILMLMSFFLLMSTFDSIISY) threads the bilayer. Residues 260–279 (SRTIITGKSTALLCPDSCRS) lie on the Cytoplasmic side of the membrane.

Belongs to the G-protein coupled receptor 1 family. As to expression, expressed in a subset of sensory neurons located in the apical layer of the vomeronasal organ.

It is found in the cell membrane. Its function is as follows. Putative pheromone receptor implicated in the regulation of social and reproductive behavior. This is Vomeronasal type-1 receptor A8 from Mus musculus (Mouse).